Consider the following 314-residue polypeptide: Ribose-phosphate pyrophosphokinase (314 aa).

ATP contacts are provided by residues 37–39 (DGE) and 96–97 (RQ). Mg(2+)-binding residues include histidine 131 and aspartate 170. Residue lysine 194 is part of the active site. Residues arginine 196, aspartate 220, and 224-228 (DTGGT) contribute to the D-ribose 5-phosphate site.

It belongs to the ribose-phosphate pyrophosphokinase family. Class I subfamily. In terms of assembly, homohexamer. Requires Mg(2+) as cofactor.

The protein resides in the cytoplasm. It carries out the reaction D-ribose 5-phosphate + ATP = 5-phospho-alpha-D-ribose 1-diphosphate + AMP + H(+). It participates in metabolic intermediate biosynthesis; 5-phospho-alpha-D-ribose 1-diphosphate biosynthesis; 5-phospho-alpha-D-ribose 1-diphosphate from D-ribose 5-phosphate (route I): step 1/1. In terms of biological role, involved in the biosynthesis of the central metabolite phospho-alpha-D-ribosyl-1-pyrophosphate (PRPP) via the transfer of pyrophosphoryl group from ATP to 1-hydroxyl of ribose-5-phosphate (Rib-5-P). In Vibrio cholerae serotype O1 (strain ATCC 39315 / El Tor Inaba N16961), this protein is Ribose-phosphate pyrophosphokinase.